The primary structure comprises 353 residues: MSEMFDVNAAVYPFPPKPVPLDDAQKAFYREKIKILLKQRNAVMVAHYYTDPEIQALAEETGGCVADSLEMARFGSNHPASTLLVAGVRFMGETAKILSPEKRVLMPTLNAECSLDLGCPEEEFNAFCDSHPDRTVVVYANTSAAVKARADWVVTSSIAVELIEHLDSLGEKIIWAPDRHLGSYVQKQTGADMLCWQGACIVHDEFKTQALMRMKALYPNAAILVHPESPQAVVSLADAVGSTSQLIQAAKTLPNSQLIVATDRGIFYKMQQACPDKELFEAPTAGEGATCRSCAHCPWMAMNGLKAIADGLEHGGVLHEIHVDAALRQKALIPLNRMLDFAAELRVQVKGNA.

Iminosuccinate contacts are provided by histidine 47 and serine 68. Residue cysteine 113 coordinates [4Fe-4S] cluster. Iminosuccinate-binding positions include 139–141 (YAN) and serine 156. Position 200 (cysteine 200) interacts with [4Fe-4S] cluster. Iminosuccinate is bound by residues 226–228 (HPE) and threonine 243. Cysteine 297 lines the [4Fe-4S] cluster pocket.

It belongs to the quinolinate synthase family. Type 1 subfamily. The cofactor is [4Fe-4S] cluster.

It localises to the cytoplasm. It carries out the reaction iminosuccinate + dihydroxyacetone phosphate = quinolinate + phosphate + 2 H2O + H(+). It participates in cofactor biosynthesis; NAD(+) biosynthesis; quinolinate from iminoaspartate: step 1/1. Functionally, catalyzes the condensation of iminoaspartate with dihydroxyacetone phosphate to form quinolinate. The protein is Quinolinate synthase of Serratia proteamaculans (strain 568).